We begin with the raw amino-acid sequence, 192 residues long: Putative integrase/recombinase y4gC (192 aa).

Positions 1-183 constitute a Tyr recombinase domain; that stretch reads MPSILERDQI…ATEDLRAIAL (183 aa). Catalysis depends on residues R41, K66, H135, R138, and H161. The active-site O-(3'-phospho-DNA)-tyrosine intermediate is Y170.

This sequence belongs to the 'phage' integrase family.

The protein is Putative integrase/recombinase y4gC of Sinorhizobium fredii (strain NBRC 101917 / NGR234).